A 184-amino-acid chain; its full sequence is FMRFamide-like neuropeptides 3 (184 aa).

Residues M1–A23 form the signal peptide. The propeptide occupies T24–P25. F35 bears the Phenylalanine amide mark. The propeptide occupies A39–Q73. Residues F82, F95, F111, and F126 each carry the phenylalanine amide modification. The segment at F90–R110 is disordered. A propeptide spanning residues E130–G142 is cleaved from the precursor. The tract at residues L150–K184 is disordered. Phenylalanine amide occurs at positions 155, 171, and 182.

This sequence belongs to the FARP (FMRFamide related peptide) family. In terms of tissue distribution, each flp gene is expressed in a distinct set of neurons. Flp-3 is expressed in the IL1 and PQR neurons.

It localises to the secreted. In terms of biological role, FMRFamides and FMRFamide-like peptides are neuropeptides. SAEPFGTMRF-amide inhibits the activity of dissected pharyngeal myogenic muscle system. This is FMRFamide-like neuropeptides 3 from Caenorhabditis elegans.